We begin with the raw amino-acid sequence, 24 residues long: 12 kDa protein (24 aa).

The protein is 12 kDa protein of Mycolicibacterium smegmatis (Mycobacterium smegmatis).